The chain runs to 104 residues: Ribonucleotide reductase inhibitor protein SML1 (104 aa).

Met1 carries the N-acetylmethionine modification. The tract at residues 43-62 is disordered; that stretch reads PMLSTQNSMGSSASASASSL. Ser56, Ser58, and Ser60 each carry phosphoserine; by DUN1.

In terms of assembly, homodimer; disulfide-linked. Interacts with RNR1. Phosphorylated by DUN1, a downstream effector of the Mec1/Rad53 checkpoint pathway, in response to DNA damage. This promotes ubiquitination of SML1 and targets it for degradation by the 26S proteasome.

The protein localises to the nucleus. Its subcellular location is the cytoplasm. Functionally, strong inhibitor of ribonucleotide reductase (RNR1) and is involved in regulating dNTP production. In Saccharomyces cerevisiae (strain ATCC 204508 / S288c) (Baker's yeast), this protein is Ribonucleotide reductase inhibitor protein SML1 (SML1).